The sequence spans 394 residues: Choline/ethanolamine kinase (394 aa).

Ala2 carries the post-translational modification N-acetylalanine. Positions 22–42 (GLLDAKCPEPIPNRRRSSSLS) are disordered. Residues 75–81 (SGGLSNL), Arg104, 146–152 (QYLPSRP), Gln244, and Asp264 contribute to the ATP site. A substrate-binding site is contributed by 77–79 (GLS).

This sequence belongs to the choline/ethanolamine kinase family. In terms of assembly, homodimer, and heterodimer with CHKA.

The catalysed reaction is choline + ATP = phosphocholine + ADP + H(+). It carries out the reaction ethanolamine + ATP = phosphoethanolamine + ADP + H(+). It participates in phospholipid metabolism; phosphatidylethanolamine biosynthesis; phosphatidylethanolamine from ethanolamine: step 1/3. In terms of biological role, has a key role in phospholipid metabolism, and catalyzes the first step of phosphatidylethanolamine and phosphatidylcholine biosynthesis. The sequence is that of Choline/ethanolamine kinase (Chkb) from Rattus norvegicus (Rat).